We begin with the raw amino-acid sequence, 465 residues long: Protein hedgehog (465 aa).

C79 carries N-palmitoyl cysteine lipidation. Ca(2+) contacts are provided by E143, E144, D149, T179, E180, D183, and D185. The Cholesterol glycine ester moiety is linked to residue G251.

It belongs to the hedgehog family. Interacts with shf. In terms of processing, the C-terminal part of the hedgehog protein precursor displays an autoproteolysis activity that results in the cleavage of the full-length protein into two parts (N-product and C-product). In addition, the C-terminal part displays a cholesterol transferase activity that results by the covalent attachment of a cholesterol moiety to the C-terminal of the newly generated N-product. The N-product is the active species in both local and long-range signaling, whereas the C-product has no signaling activity. Post-translationally, cholesterylation is required for N-product targeting to lipid rafts and multimerization. N-palmitoylation by Rasp of the hedgehog N-product, within the secretory pathway, is required for the embryonic and larval patterning activities of the hedgehog signal.

The protein resides in the nucleus. The protein localises to the cytoplasm. It localises to the cell membrane. The enzyme catalyses glycyl-L-cysteinyl-[protein] + cholesterol + H(+) = [protein]-C-terminal glycyl cholesterol ester + N-terminal L-cysteinyl-[protein]. Its function is as follows. The C-terminal part of the hedgehog protein precursor displays an autoproteolysis activity that results in the cleavage of the full-length protein into two parts (N-product and C-product). In addition, the C-terminal part displays a cholesterol transferase activity that results by the covalent attachment of a cholesterol moiety to the C-terminal of the newly generated N-product. Once cleaved, the C-product has no signaling activity and diffuses from the cell. Functionally, the dually lipidated hedgehog protein N-product is a morphogen which is essential for a variety of patterning events during development. Establishes the anterior-posterior axis of the embryonic segments and patterns the larval imaginal disks. Binds to the patched (ptc) receptor, which functions in association with smoothened (smo), to activate the transcription of target genes wingless (wg), decapentaplegic (dpp) and ptc. In the absence of hh, ptc represses the constitutive signaling activity of smo through fused (fu). Essential component of a signaling pathway which regulates the Duox-dependent gut immune response to bacterial uracil; required to activate Cad99C-dependent endosome formation, norpA-dependent Ca2+ mobilization and p38 MAPK, which are essential steps in the Duox-dependent production of reactive oxygen species (ROS) in response to intestinal bacterial infection. During photoreceptor differentiation, it up-regulates transcription of Ubr3, which in turn promotes the hh-signaling pathway by mediating the ubiquitination and degradation of cos. The polypeptide is Protein hedgehog (Drosophila sechellia (Fruit fly)).